A 395-amino-acid chain; its full sequence is tRNA-specific 2-thiouridylase MnmA (395 aa).

ATP-binding positions include 7-14 (GLSGGVDS) and M33. The interval 95 to 97 (NPD) is interaction with target base in tRNA. C100 (nucleophile) is an active-site residue. C100 and C200 are oxidised to a cystine. G124 is an ATP binding site. Residues 150–152 (KDQ) are interaction with tRNA. The active-site Cysteine persulfide intermediate is C200. The segment at 346–347 (RY) is interaction with tRNA.

The protein belongs to the MnmA/TRMU family.

The protein resides in the cytoplasm. The catalysed reaction is S-sulfanyl-L-cysteinyl-[protein] + uridine(34) in tRNA + AH2 + ATP = 2-thiouridine(34) in tRNA + L-cysteinyl-[protein] + A + AMP + diphosphate + H(+). Catalyzes the 2-thiolation of uridine at the wobble position (U34) of tRNA, leading to the formation of s(2)U34. The chain is tRNA-specific 2-thiouridylase MnmA from Flavobacterium johnsoniae (strain ATCC 17061 / DSM 2064 / JCM 8514 / BCRC 14874 / CCUG 350202 / NBRC 14942 / NCIMB 11054 / UW101) (Cytophaga johnsonae).